A 325-amino-acid chain; its full sequence is RepFIB replication protein A (325 aa).

The interval 279–298 (APNDESKENPLPPSPAEKVS) is disordered.

It belongs to the initiator RepB protein family.

This protein is essential for plasmid replication; it is involved in copy control functions. In vitro, binds to the DNA repeat units, BCDD'D'', EFG and HIJ. In Escherichia coli, this protein is RepFIB replication protein A (repA).